The primary structure comprises 392 residues: Formate-dependent phosphoribosylglycinamide formyltransferase (392 aa).

Residues 22–23 and glutamate 82 contribute to the N(1)-(5-phospho-beta-D-ribosyl)glycinamide site; that span reads EL. ATP is bound by residues arginine 114, lysine 155, 160–165, 195–198, and glutamate 203; these read SSGKGQ and EGVV. Positions 119–308 constitute an ATP-grasp domain; that stretch reads RLAAEELGLP…EFALHVRAFL (190 aa). Residues glutamate 267 and glutamate 279 each coordinate Mg(2+). N(1)-(5-phospho-beta-D-ribosyl)glycinamide contacts are provided by residues aspartate 286, lysine 355, and 362 to 363; that span reads RR.

It belongs to the PurK/PurT family. Homodimer.

The catalysed reaction is N(1)-(5-phospho-beta-D-ribosyl)glycinamide + formate + ATP = N(2)-formyl-N(1)-(5-phospho-beta-D-ribosyl)glycinamide + ADP + phosphate + H(+). Its pathway is purine metabolism; IMP biosynthesis via de novo pathway; N(2)-formyl-N(1)-(5-phospho-D-ribosyl)glycinamide from N(1)-(5-phospho-D-ribosyl)glycinamide (formate route): step 1/1. Involved in the de novo purine biosynthesis. Catalyzes the transfer of formate to 5-phospho-ribosyl-glycinamide (GAR), producing 5-phospho-ribosyl-N-formylglycinamide (FGAR). Formate is provided by PurU via hydrolysis of 10-formyl-tetrahydrofolate. In Cronobacter sakazakii (strain ATCC BAA-894) (Enterobacter sakazakii), this protein is Formate-dependent phosphoribosylglycinamide formyltransferase.